Reading from the N-terminus, the 346-residue chain is Phosphoribosylformylglycinamidine cyclo-ligase (346 aa).

This sequence belongs to the AIR synthase family.

It is found in the cytoplasm. The catalysed reaction is 2-formamido-N(1)-(5-O-phospho-beta-D-ribosyl)acetamidine + ATP = 5-amino-1-(5-phospho-beta-D-ribosyl)imidazole + ADP + phosphate + H(+). It functions in the pathway purine metabolism; IMP biosynthesis via de novo pathway; 5-amino-1-(5-phospho-D-ribosyl)imidazole from N(2)-formyl-N(1)-(5-phospho-D-ribosyl)glycinamide: step 2/2. The chain is Phosphoribosylformylglycinamidine cyclo-ligase from Bacillus cereus (strain ZK / E33L).